We begin with the raw amino-acid sequence, 418 residues long: FAD-dependent monooxygenase fmqB (418 aa).

Val-12 and Arg-68 together coordinate FAD. Arg-147 is an active-site residue. Residues Asp-272 and Gly-285 each coordinate FAD.

Belongs to the paxM FAD-dependent monooxygenase family.

The protein resides in the cytoplasm. Its pathway is alkaloid biosynthesis. Functionally, FAD-dependent monooxygenase; part of the gene cluster that mediates the biosynthesis of the antitumor fumiquinazolines that confer a dual-usage capability to defend against phagocytes in the environment and animal hosts. The simplest member is fumiquinazoline F (FQF) with a 6-6-6 tricyclic core derived from anthranilic acid (Ant), tryptophan (Trp), and alanine (Ala). The trimodular NRPS fmqA is responsible for FQF formation. Modules 1, 2 and 3 of fmqA are predicted to activate and load Ant, Trp and Ala, respectively, providing for the assembly of an Ant-Trp-Ala-S-enzyme intermediate that would undergo double cyclization for chain release and generation of the tricyclic 6-6-6 product fumiquinazoline F. The presence of an E domain predicted for module 2 of fmqA is consistent with epimerization of L-Trp to D-Trp during assembly to generate the R-stereocenter at C14 of FQF. The FAD-dependent monooxygenase fmqB and the monomodular NRPS fmqC then maturate FQF to FQA. FmqB oxidizes the 2',3'-double bond of the indole side chain of FQF, and fmqC activates L-Ala as the adenylate, installs it as the pantetheinyl thioester on its carrier protein domain, and acylates the oxidized indole for subsequent intramolecular cyclization to create the 6-5-5-imidazolindolone of FQA. The FAD-linked oxidoreductase fmqD introduces a third layer of scaffold complexity by converting FQA to the spirohemiaminal FQC, presumably by catalyzing the formation of a transient imine within the pyrazinone ring. FQC subsequently converts nonenzymatically to the known cyclic aminal FQD. The protein is FAD-dependent monooxygenase fmqB of Aspergillus fumigatus (strain ATCC MYA-4609 / CBS 101355 / FGSC A1100 / Af293) (Neosartorya fumigata).